We begin with the raw amino-acid sequence, 325 residues long: MNFGLFFLNFQLKGMTSEAVLDNMIDTIALVDKDEYHFKTAFVNEHHFSKNGIVGAPMTAASFLLGLTERLHIGSLNQVITTHHPVRIAEEASLLDQMSDGRFILGLSDCVSDFEMDFFKRQRDSQQQQFEACYEILNDGITTNYCYANNDFYNFPKISINPHCISKENLKQYILATSMGVVEWAAKKGLPLTYRWSDTLAEKENYYQRYLTVAAENNVDITHVDHQFPLLVNINPDRDIAKQEMRDYIRGYIAEAYPNTDQEEKIEELIKQHAVGTEDEYYESSKYALEKTGSKNVLLSFESMKNKAAVIDLINMVNEKIKKNL.

The protein belongs to the bacterial luciferase oxidoreductase family. In terms of assembly, heterodimer of an alpha and a beta chain.

It catalyses the reaction a long-chain fatty aldehyde + FMNH2 + O2 = a long-chain fatty acid + hnu + FMN + H2O + 2 H(+). Its function is as follows. Light-emitting reaction in luminous bacteria. The specific role of the beta subunit is unknown, but it is absolutely required for bioluminescence activity. This Photobacterium leiognathi protein is Alkanal monooxygenase beta chain (luxB).